A 105-amino-acid chain; its full sequence is Large ribosomal subunit protein bL21 (105 aa).

This sequence belongs to the bacterial ribosomal protein bL21 family. In terms of assembly, part of the 50S ribosomal subunit. Contacts protein L20.

In terms of biological role, this protein binds to 23S rRNA in the presence of protein L20. The protein is Large ribosomal subunit protein bL21 of Rhizobium johnstonii (strain DSM 114642 / LMG 32736 / 3841) (Rhizobium leguminosarum bv. viciae).